A 221-amino-acid polypeptide reads, in one-letter code: Large ribosomal subunit protein uL3 (221 aa).

This sequence belongs to the universal ribosomal protein uL3 family. Part of the 50S ribosomal subunit. Forms a cluster with proteins L14 and L19.

Functionally, one of the primary rRNA binding proteins, it binds directly near the 3'-end of the 23S rRNA, where it nucleates assembly of the 50S subunit. The sequence is that of Large ribosomal subunit protein uL3 from Chlamydia trachomatis serovar A (strain ATCC VR-571B / DSM 19440 / HAR-13).